A 457-amino-acid chain; its full sequence is Endo-1,3(4)-beta-glucanase ARB_04519 (457 aa).

The first 18 residues, 1–18 (MRTTGLLLLGALAELGSA), serve as a signal peptide directing secretion. Positions 19–319 (TYILEDDYQP…YMKVYQQGTA (301 aa)) constitute a GH16 domain. E130 acts as the Nucleophile in catalysis. The Proton donor role is filled by E135. An N-linked (GlcNAc...) asparagine glycan is attached at N200. The tract at residues 318–397 (TAPTKPSQAP…DSCPPPTQPA (80 aa)) is disordered. The segment covering 333–352 (TPALPTMKSTSTVSSMVSAT) has biased composition (low complexity). A compositionally biased stretch (polar residues) spans 353 to 362 (QPAPTASNPT). Low complexity predominate over residues 368–378 (PSSSSSNNGPQ).

This sequence belongs to the glycosyl hydrolase 16 family.

It is found in the secreted. The enzyme catalyses Endohydrolysis of (1-&gt;3)- or (1-&gt;4)-linkages in beta-D-glucans when the glucose residue whose reducing group is involved in the linkage to be hydrolyzed is itself substituted at C-3.. Mixed-linked glucanase involved in the degradation of complex natural cellulosic substrates. Active on laminarin. lichenan, soluble carboxymethyl cellulose but not on pustulan. The protein is Endo-1,3(4)-beta-glucanase ARB_04519 of Arthroderma benhamiae (strain ATCC MYA-4681 / CBS 112371) (Trichophyton mentagrophytes).